Reading from the N-terminus, the 523-residue chain is Transcription factor MYB120 (523 aa).

2 HTH myb-type domains span residues 23–75 (GVIL…ANHL) and 76–130 (RPNL…KRLL). 2 DNA-binding regions (H-T-H motif) span residues 51 to 75 (WNAV…ANHL) and 103 to 126 (WARM…NTRL). Disordered regions lie at residues 140-254 (DIIP…YPTL), 332-373 (QTAT…SHYT), 396-426 (QIPQ…GAHR), and 444-470 (LASG…NNTN). Positions 147–167 (LHPHPHHQQQQQHNHHHHHHQ) are enriched in basic residues. Over residues 175-185 (MYFQPQSSQRN) the composition is skewed to polar residues. Low complexity-rich tracts occupy residues 202 to 212 (SSSSFTFHTTT), 223 to 232 (TPNTPSQLSS), and 341 to 368 (NPYS…PSFL). Residues 396–410 (QIPQIDGFNNVNNFT) show a composition bias toward polar residues.

As to expression, expressed in pollen grains and pollen tube. Mostly expressed in mature pollen grains, and, to a lower extent, in inflorescences and siliques.

The protein localises to the nucleus. Transcription activator. Binds to 5'-CAACTGTC-3' and/or 5'-TAACAAA-3' motif in target gene promoter to promote their expression. Together with MYB97 and MYB101, functions as a male factor that controls pollen tube-synergid interaction in fertilization. Required for pollen tube growth arrest and sperm cell release in the female gametophyte, probably via the regulation of pollen tube-specific gene expression. The sequence is that of Transcription factor MYB120 from Arabidopsis thaliana (Mouse-ear cress).